Reading from the N-terminus, the 290-residue chain is Glycine--tRNA ligase alpha subunit (290 aa).

It belongs to the class-II aminoacyl-tRNA synthetase family. Tetramer of two alpha and two beta subunits.

It localises to the cytoplasm. The enzyme catalyses tRNA(Gly) + glycine + ATP = glycyl-tRNA(Gly) + AMP + diphosphate. The protein is Glycine--tRNA ligase alpha subunit of Nitratiruptor sp. (strain SB155-2).